The primary structure comprises 1366 residues: MTSSKPKKTSRVRKTTKNSKKNNPVTMPALAKTPPSFKNKVVDKKALKNLVSWAYKTHGTAITAAMADNLKDLGFKYATQAAVSISVDDLKVPDAKQDLIGQAEEQISATEECYRLGEITEVERHTKVIDTWTETNERLVDAVKNNFNQNDPLNSVWMMANSGARGNMSQVRQLVGMRGLMANPQGEIIDLPIRTNFREGLTVTEYVISSYGARKGLVDTALRTADSGYLTRRLVDVAQDVIVREEDCGTERSIVVEAEDGKFGARLLGRLTAEDVLDAEENLLVPQNTAIDPALSGEIEKASINKVKIRSPLTCEANRSVCRRCYGWALAHNHLVDLGEAVGIIAAQSIGEPGTQLTMRTFHTGGVSTAESGVVRSKISGKVEFSSKAKIRGYRTPHGVEAKQAEVDFILKIVPQGNNSGKAQKIEVSSGSLLFVDDGEEINSDITVAQITAGAVKKSVEKATKDVICDLAGQVRYDKVIQPKEVTDRQGNITLKAQRLGRLWVLAGDVYNLPPNARPVISSGKSVDEGTVLAEASQSSEFGGQVRLRESIGDSREVQIVTTSMSLTNFKLIEESTHSGQIYNLESIDGISYRLNISPGSKISNGEVIADLTDERFRTKTGGLVKYAPGLSVKKARSSKNGFEVSQGGTLLWIPQETHEINKDISLLMIEDMKWIEAGTEVVKDIFSQTSGIVTVTQKNDILREITIRNGTFHECDDEEVLNRFTEEGNLVNPGEKILDGVDNKEILFVQKLETPKCRGLLLRTVEEFTIPDQAELPQLAHVKQEKGPYLGLKAIQRLTYKDGELIKSVEGVELLRTHLSIESFDATPQMTIDVESIEDKNDSSINRLNLVILESILVRRDTISDSSHGSTHTELQVNDNQLVKAGDVISTTQILCKEKGLVQLPNVVDDEPIRRLIVERQEDKIKIKISDKALVKVGDRVVDGDPISKSIKSTFCGEIEEVSNSSVTLRYGRPYMVSPDSVLHVKDGDLVLRGDGLALLVFERQKTGDIVQGLPRIEELLEARRPRDAAILCKKSGIVQIKQGNDEESVSLSVIEKDDLVNEYQLLVGKNLMVSDGQQVAGGEPLTDGPLNPHELLDCYFNDLKDQKPLLDAARESISKLQRSMVSEVQNVYKSQGVAIDDKHIEVIVRQMTSKVRIEDAGDTTLLPGELIELRQVEDTNQAMAITGGAPAEFTPVLLGITKASLNTDSFISAASFQETTRVLTEAAIEGKSDWLRGLKENVIIGRLIPAGTGFSGFVEELSSEAGPHPDILAEESGGYRRAQNLRPDYTVDMPQSPAVSSSAILDDPSDEDLETTRNRHGIDPSSSNFAAFARPNAENQFSEDQLPDPAALEGLQEEGLLSDE.

Basic residues predominate over residues 1–20; the sequence is MTSSKPKKTSRVRKTTKNSK. A disordered region spans residues 1-33; the sequence is MTSSKPKKTSRVRKTTKNSKKNNPVTMPALAKT. Zn(2+) contacts are provided by C248, C315, C322, and C325. Residues 1291–1366 are disordered; it reads YTVDMPQSPA…LQEEGLLSDE (76 aa). Residues 1354-1366 are compositionally biased toward low complexity; it reads LEGLQEEGLLSDE.

It belongs to the RNA polymerase beta' chain family. RpoC2 subfamily. As to quaternary structure, in cyanobacteria the RNAP catalytic core is composed of 2 alpha, 1 beta, 1 beta', 1 gamma and 1 omega subunit. When a sigma factor is associated with the core the holoenzyme is formed, which can initiate transcription. The cofactor is Zn(2+).

It catalyses the reaction RNA(n) + a ribonucleoside 5'-triphosphate = RNA(n+1) + diphosphate. Functionally, DNA-dependent RNA polymerase catalyzes the transcription of DNA into RNA using the four ribonucleoside triphosphates as substrates. This Prochlorococcus marinus (strain AS9601) protein is DNA-directed RNA polymerase subunit beta'.